A 353-amino-acid polypeptide reads, in one-letter code: Fe(3+) ions import ATP-binding protein FbpC (353 aa).

The region spanning 9 to 239 (VTFENVTKKF…PASAFIADFM (231 aa)) is the ABC transporter domain. Residue 41–48 (GLSGCGKT) coordinates ATP.

The protein belongs to the ABC transporter superfamily. Fe(3+) ion importer (TC 3.A.1.10) family. As to quaternary structure, the complex is composed of two ATP-binding proteins (FbpC), two transmembrane proteins (FbpB) and a solute-binding protein (FbpA).

The protein localises to the cell inner membrane. The enzyme catalyses Fe(3+)(out) + ATP + H2O = Fe(3+)(in) + ADP + phosphate + H(+). Part of the ABC transporter complex FbpABC involved in Fe(3+) ions import. Responsible for energy coupling to the transport system. The chain is Fe(3+) ions import ATP-binding protein FbpC from Brucella melitensis biotype 1 (strain ATCC 23456 / CCUG 17765 / NCTC 10094 / 16M).